The following is a 611-amino-acid chain: Chaperone protein DnaK (611 aa).

Thr-173 is modified (phosphothreonine; by autocatalysis). Residues 579 to 592 are compositionally biased toward low complexity; it reads AAGQAEGAQGAQDA. Residues 579-598 are disordered; the sequence is AAGQAEGAQGAQDAGAKKDN.

This sequence belongs to the heat shock protein 70 family.

Functionally, acts as a chaperone. In Bacillus cereus (strain AH187), this protein is Chaperone protein DnaK.